Reading from the N-terminus, the 279-residue chain is Shikimate dehydrogenase (NADP(+)) (279 aa).

Shikimate is bound by residues 16–18 and T63; that span reads SRS. K67 (proton acceptor) is an active-site residue. Residues N88 and D103 each coordinate shikimate. NADP(+)-binding positions include 128-132 and M219; that span reads GAGGA. Y221 is a shikimate binding site. G243 contacts NADP(+).

This sequence belongs to the shikimate dehydrogenase family. As to quaternary structure, homodimer.

It catalyses the reaction shikimate + NADP(+) = 3-dehydroshikimate + NADPH + H(+). The protein operates within metabolic intermediate biosynthesis; chorismate biosynthesis; chorismate from D-erythrose 4-phosphate and phosphoenolpyruvate: step 4/7. In terms of biological role, involved in the biosynthesis of the chorismate, which leads to the biosynthesis of aromatic amino acids. Catalyzes the reversible NADPH linked reduction of 3-dehydroshikimate (DHSA) to yield shikimate (SA). The polypeptide is Shikimate dehydrogenase (NADP(+)) (Aromatoleum aromaticum (strain DSM 19018 / LMG 30748 / EbN1) (Azoarcus sp. (strain EbN1))).